The chain runs to 220 residues: MSAAQARHLTTLATGRYGFELQTLMERAGESLAGLAAHLAPDGPVLVVAGRGHNGGVGLAAAHCLARARRAVWVVPTHEAENYSGVPKELLERLAELPNVRLRSSLPKMKFSCALDAAVGMRLEGPPRGRTLDVITVLNNLGCKVLSLDVPTGLAADSGEVPGDVVRASATLALALPKPGTPPGGVVGDLYLASFDLPEALFHDVGLEPFVAPSPWARIV.

Positions 6 to 203 (ARHLTTLATG…SFDLPEALFH (198 aa)) constitute a YjeF N-terminal domain. 53-57 (HNGGV) contacts (6S)-NADPHX. K(+) contacts are provided by asparagine 54 and aspartate 116. (6S)-NADPHX contacts are provided by residues 120–126 (GMRLEGP) and aspartate 149. Threonine 152 contributes to the K(+) binding site.

It belongs to the NnrE/AIBP family. K(+) serves as cofactor.

The enzyme catalyses (6R)-NADHX = (6S)-NADHX. The catalysed reaction is (6R)-NADPHX = (6S)-NADPHX. Its function is as follows. Catalyzes the epimerization of the S- and R-forms of NAD(P)HX, a damaged form of NAD(P)H that is a result of enzymatic or heat-dependent hydration. This is a prerequisite for the S-specific NAD(P)H-hydrate dehydratase to allow the repair of both epimers of NAD(P)HX. This Truepera radiovictrix (strain DSM 17093 / CIP 108686 / LMG 22925 / RQ-24) protein is NAD(P)H-hydrate epimerase.